Consider the following 459-residue polypeptide: Putrescine aminotransferase (459 aa).

Pyridoxal 5'-phosphate contacts are provided by residues glycine 150 to threonine 151 and glutamine 274. N6-(pyridoxal phosphate)lysine is present on lysine 300. Threonine 332 lines the pyridoxal 5'-phosphate pocket.

The protein belongs to the class-III pyridoxal-phosphate-dependent aminotransferase family. Putrescine aminotransferase subfamily. Pyridoxal 5'-phosphate is required as a cofactor.

It carries out the reaction an alkane-alpha,omega-diamine + 2-oxoglutarate = an omega-aminoaldehyde + L-glutamate. The enzyme catalyses putrescine + 2-oxoglutarate = 1-pyrroline + L-glutamate + H2O. The catalysed reaction is cadaverine + 2-oxoglutarate = 5-aminopentanal + L-glutamate. It participates in amine and polyamine degradation; putrescine degradation; 4-aminobutanal from putrescine (transaminase route): step 1/1. Catalyzes the aminotransferase reaction from putrescine to 2-oxoglutarate, leading to glutamate and 4-aminobutanal, which spontaneously cyclizes to form 1-pyrroline. This is the first step in one of two pathways for putrescine degradation, where putrescine is converted into 4-aminobutanoate (gamma-aminobutyrate or GABA) via 4-aminobutanal. Also functions as a cadaverine transaminase in a a L-lysine degradation pathway to succinate that proceeds via cadaverine, glutarate and L-2-hydroxyglutarate. This chain is Putrescine aminotransferase, found in Klebsiella pneumoniae subsp. pneumoniae (strain ATCC 700721 / MGH 78578).